The chain runs to 227 residues: NAD(P)H-quinone oxidoreductase subunit K, chloroplastic (227 aa).

[4Fe-4S] cluster-binding residues include Cys-43, Cys-44, Cys-108, and Cys-139.

Belongs to the complex I 20 kDa subunit family. In terms of assembly, NDH is composed of at least 16 different subunits, 5 of which are encoded in the nucleus. [4Fe-4S] cluster serves as cofactor.

It localises to the plastid. It is found in the chloroplast thylakoid membrane. It catalyses the reaction a plastoquinone + NADH + (n+1) H(+)(in) = a plastoquinol + NAD(+) + n H(+)(out). It carries out the reaction a plastoquinone + NADPH + (n+1) H(+)(in) = a plastoquinol + NADP(+) + n H(+)(out). Functionally, NDH shuttles electrons from NAD(P)H:plastoquinone, via FMN and iron-sulfur (Fe-S) centers, to quinones in the photosynthetic chain and possibly in a chloroplast respiratory chain. The immediate electron acceptor for the enzyme in this species is believed to be plastoquinone. Couples the redox reaction to proton translocation, and thus conserves the redox energy in a proton gradient. The sequence is that of NAD(P)H-quinone oxidoreductase subunit K, chloroplastic from Citrus sinensis (Sweet orange).